Consider the following 660-residue polypeptide: Pentatricopeptide repeat-containing protein At1g03560, mitochondrial (660 aa).

The N-terminal 12 residues, 1 to 12, are a transit peptide targeting the mitochondrion; that stretch reads MRRFYRKPFSVP. PPR repeat units lie at residues 151 to 185, 186 to 220, 221 to 255, 256 to 290, 291 to 325, 326 to 360, 361 to 395, 396 to 430, 431 to 465, 466 to 496, 502 to 536, 537 to 571, 574 to 605, and 606 to 640; these read NLEC…EFPM, TVSA…GIEP, TLYT…RIKP, DIVT…GHEA, DKIT…GIQV, PPHA…GSKP, NVAI…GFKP, DVVT…GLAI, NSMF…GCTR, DSYC…MEEE, TVYT…GITP, TAAC…GVIL, ACED…GREV, and PGRI…GYER.

The protein belongs to the PPR family. P subfamily.

Its subcellular location is the mitochondrion. The polypeptide is Pentatricopeptide repeat-containing protein At1g03560, mitochondrial (Arabidopsis thaliana (Mouse-ear cress)).